Here is a 244-residue protein sequence, read N- to C-terminus: tRNA (guanine-N(1)-)-methyltransferase (244 aa).

S-adenosyl-L-methionine contacts are provided by residues Gly-112 and 131–136; that span reads LGDFIL. Residues 211–244 are disordered; the sequence is IKRTSDRRPDLLEKWQQEKKPGSREQGSREQGEK.

Belongs to the RNA methyltransferase TrmD family. In terms of assembly, homodimer.

It localises to the cytoplasm. It catalyses the reaction guanosine(37) in tRNA + S-adenosyl-L-methionine = N(1)-methylguanosine(37) in tRNA + S-adenosyl-L-homocysteine + H(+). Functionally, specifically methylates guanosine-37 in various tRNAs. The protein is tRNA (guanine-N(1)-)-methyltransferase of Trichormus variabilis (strain ATCC 29413 / PCC 7937) (Anabaena variabilis).